We begin with the raw amino-acid sequence, 110 residues long: Large ribosomal subunit protein uL22 (110 aa).

Belongs to the universal ribosomal protein uL22 family. Part of the 50S ribosomal subunit.

Functionally, this protein binds specifically to 23S rRNA; its binding is stimulated by other ribosomal proteins, e.g. L4, L17, and L20. It is important during the early stages of 50S assembly. It makes multiple contacts with different domains of the 23S rRNA in the assembled 50S subunit and ribosome. In terms of biological role, the globular domain of the protein is located near the polypeptide exit tunnel on the outside of the subunit, while an extended beta-hairpin is found that lines the wall of the exit tunnel in the center of the 70S ribosome. This Exiguobacterium sp. (strain ATCC BAA-1283 / AT1b) protein is Large ribosomal subunit protein uL22.